A 473-amino-acid polypeptide reads, in one-letter code: MTAAESIAASINQIDEKKQKLKKAFDDLQAHRSLLSPSFNLSWSEIDSHFSSLQSSLFNRLQSAVTSSNSGNIETPTAVTTETPVLWPELRKFCEKNDGKGLGNYMIENSRKRLSINEELPNAIRCSENPAPLVLDAIEGSYHCSSPSSSSSARAIDVKRIFVLLLEALIEINANLTNDLRERARTIAYDWKPNIGNKPSEALGFLHLVAAFELGSLFSTEEICDYIFLISKYKQATTICKKIGLDRNRIGVLVQKFLDTGRLLVAIRFIYENEMVGEFEPVSILKTSLKNSREAAKRVCAEGNYSLKVQNEATDKELSALRAVIKVVKEKNIESEFMEEKLEECVKELEDQKAQRKRATKFNSPANPQQPQEQKVDNKRPRVANGSSMEYNLTIPPLRPQQQPPLLPTPSQILQVNPYGLLSSILPGVAVPYGNPRALFGSVPAPASRPVFYVQQTGYGMPPPQYRPPYYPQ.

Coiled coils occupy residues 3–35 (AAES…RSLL) and 306–361 (SLKV…RATK). The tract at residues 356–384 (RKRATKFNSPANPQQPQEQKVDNKRPRVA) is disordered. Residues 361–373 (KFNSPANPQQPQE) are compositionally biased toward polar residues.

This sequence belongs to the Frigida family. In terms of tissue distribution, expressed at low levels throughout the plant, with slightly higher expression in developing seeds and the highest expression in pollen.

Its function is as follows. Inactive FRIGIDA-like 2 protein. In Arabidopsis thaliana (Mouse-ear cress), this protein is Inactive FRIGIDA-like protein 2 (FRL2).